Reading from the N-terminus, the 779-residue chain is Endoribonuclease YSH1 (779 aa).

Positions 68, 70, 72, 73, 163, and 184 each coordinate Zn(2+). The active-site Proton donor is histidine 408. Histidine 430 contacts Zn(2+). Serine 517 carries the post-translational modification Phosphoserine; by ATM or ATR.

Belongs to the metallo-beta-lactamase superfamily. RNA-metabolizing metallo-beta-lactamase-like family. CPSF2/YSH1 subfamily. As to quaternary structure, component of the cleavage and polyadenylation factor (CPF) complex, which is composed of at least PTI1, SYC1, SSU72, GLC7, MPE1, REF2, PFS2, PTA1, YSH1/BRR5, SWD2, CFT2/YDH1, YTH1, CFT1/YHH1, FIP1 and PAP1. Interacts with FIP1, PFS2, RNA14 and YTH1. It depends on Zn(2+) as a cofactor.

It localises to the nucleus. Component of the cleavage and polyadenylation factor (CPF) complex, which plays a key role in polyadenylation-dependent pre-mRNA 3'-end formation and cooperates with cleavage factors including the CFIA complex and NAB4/CFIB. Has endonuclease activity. This chain is Endoribonuclease YSH1 (YSH1), found in Saccharomyces cerevisiae (strain ATCC 204508 / S288c) (Baker's yeast).